Reading from the N-terminus, the 179-residue chain is Large ribosomal subunit protein uL5 (179 aa).

It belongs to the universal ribosomal protein uL5 family. Part of the 50S ribosomal subunit; part of the 5S rRNA/L5/L18/L25 subcomplex. Contacts the 5S rRNA and the P site tRNA. Forms a bridge to the 30S subunit in the 70S ribosome.

Functionally, this is one of the proteins that bind and probably mediate the attachment of the 5S RNA into the large ribosomal subunit, where it forms part of the central protuberance. In the 70S ribosome it contacts protein S13 of the 30S subunit (bridge B1b), connecting the 2 subunits; this bridge is implicated in subunit movement. Contacts the P site tRNA; the 5S rRNA and some of its associated proteins might help stabilize positioning of ribosome-bound tRNAs. The polypeptide is Large ribosomal subunit protein uL5 (Staphylococcus epidermidis (strain ATCC 35984 / DSM 28319 / BCRC 17069 / CCUG 31568 / BM 3577 / RP62A)).